A 216-amino-acid chain; its full sequence is Peptide methionine sulfoxide reductase MsrA (216 aa).

C58 is an active-site residue.

This sequence belongs to the MsrA Met sulfoxide reductase family.

It catalyses the reaction L-methionyl-[protein] + [thioredoxin]-disulfide + H2O = L-methionyl-(S)-S-oxide-[protein] + [thioredoxin]-dithiol. The enzyme catalyses [thioredoxin]-disulfide + L-methionine + H2O = L-methionine (S)-S-oxide + [thioredoxin]-dithiol. Functionally, has an important function as a repair enzyme for proteins that have been inactivated by oxidation. Catalyzes the reversible oxidation-reduction of methionine sulfoxide in proteins to methionine. This Azotobacter vinelandii (strain DJ / ATCC BAA-1303) protein is Peptide methionine sulfoxide reductase MsrA.